The chain runs to 245 residues: Octanoyltransferase (245 aa).

The BPL/LPL catalytic domain maps to 54–238 (GEATELVWLL…AFENIFGETR (185 aa)). Residues 92–99 (RGGQLTYH), 167–169 (AIG), and 180–182 (GIA) contribute to the substrate site. Cysteine 198 acts as the Acyl-thioester intermediate in catalysis.

The protein belongs to the LipB family.

The protein resides in the cytoplasm. It catalyses the reaction octanoyl-[ACP] + L-lysyl-[protein] = N(6)-octanoyl-L-lysyl-[protein] + holo-[ACP] + H(+). Its pathway is protein modification; protein lipoylation via endogenous pathway; protein N(6)-(lipoyl)lysine from octanoyl-[acyl-carrier-protein]: step 1/2. Catalyzes the transfer of endogenously produced octanoic acid from octanoyl-acyl-carrier-protein onto the lipoyl domains of lipoate-dependent enzymes. Lipoyl-ACP can also act as a substrate although octanoyl-ACP is likely to be the physiological substrate. The sequence is that of Octanoyltransferase from Rhodopseudomonas palustris (strain TIE-1).